Consider the following 232-residue polypeptide: Ubiquinone biosynthesis O-methyltransferase (232 aa).

S-adenosyl-L-methionine is bound by residues arginine 36, glycine 55, aspartate 76, and leucine 120.

The protein belongs to the methyltransferase superfamily. UbiG/COQ3 family.

It carries out the reaction a 3-demethylubiquinol + S-adenosyl-L-methionine = a ubiquinol + S-adenosyl-L-homocysteine + H(+). The catalysed reaction is a 3-(all-trans-polyprenyl)benzene-1,2-diol + S-adenosyl-L-methionine = a 2-methoxy-6-(all-trans-polyprenyl)phenol + S-adenosyl-L-homocysteine + H(+). Its pathway is cofactor biosynthesis; ubiquinone biosynthesis. O-methyltransferase that catalyzes the 2 O-methylation steps in the ubiquinone biosynthetic pathway. This is Ubiquinone biosynthesis O-methyltransferase from Pseudomonas aeruginosa (strain ATCC 15692 / DSM 22644 / CIP 104116 / JCM 14847 / LMG 12228 / 1C / PRS 101 / PAO1).